A 354-amino-acid polypeptide reads, in one-letter code: Biotin synthase (354 aa).

In terms of domain architecture, Radical SAM core spans 64–282; it reads GDVELATLLS…IAVARITMPR (219 aa). The [4Fe-4S] cluster site is built by Cys-79, Cys-83, and Cys-86. Residues Cys-123, Cys-154, Cys-214, and Arg-286 each contribute to the [2Fe-2S] cluster site.

It belongs to the radical SAM superfamily. Biotin synthase family. In terms of assembly, homodimer. The cofactor is [4Fe-4S] cluster. [2Fe-2S] cluster is required as a cofactor.

It catalyses the reaction (4R,5S)-dethiobiotin + (sulfur carrier)-SH + 2 reduced [2Fe-2S]-[ferredoxin] + 2 S-adenosyl-L-methionine = (sulfur carrier)-H + biotin + 2 5'-deoxyadenosine + 2 L-methionine + 2 oxidized [2Fe-2S]-[ferredoxin]. It functions in the pathway cofactor biosynthesis; biotin biosynthesis; biotin from 7,8-diaminononanoate: step 2/2. Functionally, catalyzes the conversion of dethiobiotin (DTB) to biotin by the insertion of a sulfur atom into dethiobiotin via a radical-based mechanism. In Paracidovorax citrulli (strain AAC00-1) (Acidovorax citrulli), this protein is Biotin synthase.